We begin with the raw amino-acid sequence, 440 residues long: MITKIHARSVYDSRGNPTVEVDLTTTDTGLHRAIVPSGASTGQHEAIELRDKDKTKWAGKGVLKAVENVNTIIAPALIKEKFDVKDQATIDKFLIDLDGTPNKAKLGANAILGVSLAVAKAGAAAKKVPLYAHVADLAGTKKPFVLPVPFMNVINGGSHAGGRLAFQEFMIVPSEAPSFTEAMRQGAEVYQILKTLTKKKYGQSAGNVGDEGGWPDIQTVEEALDLITDAIDKAGYTGQIKIAMDVASSEFYKEDAKKYDLDFKNPDSDSSKWLTYQELADLYKSLAQRYPIVSIEDPFAEDDWEAWAHFYKTSDFQIVGDDLTVTNPIRIKRAIDEKSCNALLLKVNQIATLTESIQAAKDSYSAGWGVMVSHRSGETEDVTIADIVVGLRAGQIKTGAPARSERLAKLNQILRIEEELGEQAIYAGTSSEPPHLYIFI.

His-159 and Glu-168 together coordinate substrate. The active-site Proton donor is the Glu-211. Positions 245, 296, and 321 each coordinate Mg(2+). The substrate site is built by Glu-296 and Asp-321. The active-site Proton acceptor is Lys-346. Substrate is bound by residues 373–376 and Lys-397; that span reads SHRS.

Belongs to the enolase family. Homodimer. Mg(2+) is required as a cofactor.

It localises to the cytoplasm. The catalysed reaction is (2R)-2-phosphoglycerate = phosphoenolpyruvate + H2O. Its pathway is carbohydrate degradation; glycolysis; pyruvate from D-glyceraldehyde 3-phosphate: step 4/5. This is Enolase (eno-1) from Tuber borchii (White truffle).